The primary structure comprises 402 residues: MSDARLFTSESVTEGHPDKICDAISDSVLDALLADDPKSRVAVETLVTTGQVHVVGEVTTTAKAAFADITNTVRERILEIGYDHSDKGFDGLTCGVNIGIGKQSPDIAQGVDTAHETRVEGAADPLDSQGAGDQGLMFGYAIADTPELMPLPIALAHRLSRKLTEVRKNGTLDYLRPDGKTQVTVQYDGTTPVRLDTVVLSTQHADGIDLESQLAPEIKQHVIDAVLTELGHDTLDTSAPRILVNPTGKFVLGGPMGDAGLTGRKIIVDTYGGWARHGGGAFSGKDPSKVDRSAAYAMRWVAKNVVAAGLAQRVEVQVAYAIGKAAPVGLFVETFGSETVDPVKIQKAIGEVFDLRPGAIVRDLDLLRPIYAPTAAYGHFGRTDIELPWEQLDKVDDLKAAV.

His-16 is a binding site for ATP. Asp-18 is a Mg(2+) binding site. Glu-44 lines the K(+) pocket. L-methionine is bound by residues Glu-57 and Gln-103. Residues 103–113 (QSPDIAQGVDT) are flexible loop. ATP contacts are provided by residues 178 to 180 (DGK), 249 to 250 (KF), Asp-258, 264 to 265 (RK), Ala-281, and Lys-285. Asp-258 contributes to the L-methionine binding site. Lys-289 is an L-methionine binding site.

It belongs to the AdoMet synthase family. Homotetramer; dimer of dimers. Mg(2+) is required as a cofactor. Requires K(+) as cofactor.

The protein localises to the cytoplasm. It catalyses the reaction L-methionine + ATP + H2O = S-adenosyl-L-methionine + phosphate + diphosphate. It functions in the pathway amino-acid biosynthesis; S-adenosyl-L-methionine biosynthesis; S-adenosyl-L-methionine from L-methionine: step 1/1. Functionally, catalyzes the formation of S-adenosylmethionine (AdoMet) from methionine and ATP. The overall synthetic reaction is composed of two sequential steps, AdoMet formation and the subsequent tripolyphosphate hydrolysis which occurs prior to release of AdoMet from the enzyme. This chain is S-adenosylmethionine synthase, found in Mycolicibacterium vanbaalenii (strain DSM 7251 / JCM 13017 / BCRC 16820 / KCTC 9966 / NRRL B-24157 / PYR-1) (Mycobacterium vanbaalenii).